A 212-amino-acid chain; its full sequence is Imidazole glycerol phosphate synthase subunit HisH 2 (212 aa).

A Glutamine amidotransferase type-1 domain is found at 3-212 (RVAIIDYGIN…LMSNFLQWNP (210 aa)). The active-site Nucleophile is the C82. Residues H192 and E194 contribute to the active site.

Heterodimer of HisH and HisF.

It localises to the cytoplasm. It catalyses the reaction 5-[(5-phospho-1-deoxy-D-ribulos-1-ylimino)methylamino]-1-(5-phospho-beta-D-ribosyl)imidazole-4-carboxamide + L-glutamine = D-erythro-1-(imidazol-4-yl)glycerol 3-phosphate + 5-amino-1-(5-phospho-beta-D-ribosyl)imidazole-4-carboxamide + L-glutamate + H(+). The catalysed reaction is L-glutamine + H2O = L-glutamate + NH4(+). It participates in amino-acid biosynthesis; L-histidine biosynthesis; L-histidine from 5-phospho-alpha-D-ribose 1-diphosphate: step 5/9. Its function is as follows. IGPS catalyzes the conversion of PRFAR and glutamine to IGP, AICAR and glutamate. The HisH subunit provides the glutamine amidotransferase activity that produces the ammonia necessary to HisF for the synthesis of IGP and AICAR. In Nitrobacter winogradskyi (strain ATCC 25391 / DSM 10237 / CIP 104748 / NCIMB 11846 / Nb-255), this protein is Imidazole glycerol phosphate synthase subunit HisH 2.